Reading from the N-terminus, the 207-residue chain is Urease accessory protein UreG (207 aa).

16–23 (GPVGSGKT) contacts GTP.

This sequence belongs to the SIMIBI class G3E GTPase family. UreG subfamily. In terms of assembly, homodimer. UreD, UreF and UreG form a complex that acts as a GTP-hydrolysis-dependent molecular chaperone, activating the urease apoprotein by helping to assemble the nickel containing metallocenter of UreC. The UreE protein probably delivers the nickel.

The protein localises to the cytoplasm. Its function is as follows. Facilitates the functional incorporation of the urease nickel metallocenter. This process requires GTP hydrolysis, probably effectuated by UreG. In Blochmanniella pennsylvanica (strain BPEN), this protein is Urease accessory protein UreG.